Here is a 428-residue protein sequence, read N- to C-terminus: Histidinol dehydrogenase (428 aa).

Residues tyrosine 127, glutamine 185, and asparagine 208 each contribute to the NAD(+) site. Positions 232, 254, and 257 each coordinate substrate. Positions 254 and 257 each coordinate Zn(2+). Residues glutamate 321 and histidine 322 each act as proton acceptor in the active site. Residues histidine 322, aspartate 355, glutamate 409, and histidine 414 each contribute to the substrate site. Residue aspartate 355 participates in Zn(2+) binding. Histidine 414 contacts Zn(2+).

Belongs to the histidinol dehydrogenase family. Zn(2+) serves as cofactor.

The catalysed reaction is L-histidinol + 2 NAD(+) + H2O = L-histidine + 2 NADH + 3 H(+). Its pathway is amino-acid biosynthesis; L-histidine biosynthesis; L-histidine from 5-phospho-alpha-D-ribose 1-diphosphate: step 9/9. Catalyzes the sequential NAD-dependent oxidations of L-histidinol to L-histidinaldehyde and then to L-histidine. This is Histidinol dehydrogenase from Pasteurella multocida (strain Pm70).